The primary structure comprises 293 residues: Glycine--tRNA ligase alpha subunit (293 aa).

The protein belongs to the class-II aminoacyl-tRNA synthetase family. In terms of assembly, tetramer of two alpha and two beta subunits.

The protein resides in the cytoplasm. The enzyme catalyses tRNA(Gly) + glycine + ATP = glycyl-tRNA(Gly) + AMP + diphosphate. This Acaryochloris marina (strain MBIC 11017) protein is Glycine--tRNA ligase alpha subunit.